A 194-amino-acid polypeptide reads, in one-letter code: Putative NAD(P)H nitroreductase YfhC (194 aa).

FMN-binding positions include 20-22 (RRS), 147-148 (KI), and R188.

This sequence belongs to the nitroreductase family. Requires FMN as cofactor.

This Bacillus subtilis (strain 168) protein is Putative NAD(P)H nitroreductase YfhC (yfhC).